The sequence spans 596 residues: Deuterosome assembly protein 1 (596 aa).

Coiled coils occupy residues 8-68, 130-180, and 227-284; these read IARN…NHEI, CELQ…FQKE, and IENL…DLLR. Over residues 297-306 the composition is skewed to polar residues; sequence TANLANQKTA. The segment at 297-316 is disordered; that stretch reads TANLANQKTAQGEEASFQVT. Residues 337–402 adopt a coiled-coil conformation; that stretch reads SEKYQAENDL…LKGAQNRQTS (66 aa). The disordered stretch occupies residues 447–467; it reads DKPQKHRSFHGENNSLKPTNY. A compositionally biased stretch (polar residues) spans 457–467; it reads GENNSLKPTNY.

It belongs to the CEP63 family.

It localises to the cytoplasm. Key structural component of the deuterosome, a structure that promotes de novo centriole amplification in multiciliated cells. Deuterosome-mediated centriole amplification occurs in terminally differentiated multiciliated cells and can generate more than 100 centrioles. Probably sufficient for the specification and formation of the deuterosome inner core. The protein is Deuterosome assembly protein 1 of Xenopus tropicalis (Western clawed frog).